We begin with the raw amino-acid sequence, 327 residues long: Tagatose 1,6-diphosphate aldolase 2 (327 aa).

Belongs to the aldolase LacD family.

The catalysed reaction is D-tagatofuranose 1,6-bisphosphate = D-glyceraldehyde 3-phosphate + dihydroxyacetone phosphate. Its pathway is carbohydrate metabolism; D-tagatose 6-phosphate degradation; D-glyceraldehyde 3-phosphate and glycerone phosphate from D-tagatose 6-phosphate: step 2/2. The sequence is that of Tagatose 1,6-diphosphate aldolase 2 from Streptococcus pyogenes serotype M6 (strain ATCC BAA-946 / MGAS10394).